The chain runs to 122 residues: Large ribosomal subunit protein uL18 (122 aa).

A compositionally biased stretch (basic residues) spans methionine 1 to isoleucine 21. Residues methionine 1 to serine 25 form a disordered region.

Belongs to the universal ribosomal protein uL18 family. In terms of assembly, part of the 50S ribosomal subunit; part of the 5S rRNA/L5/L18/L25 subcomplex. Contacts the 5S and 23S rRNAs.

This is one of the proteins that bind and probably mediate the attachment of the 5S RNA into the large ribosomal subunit, where it forms part of the central protuberance. The sequence is that of Large ribosomal subunit protein uL18 from Synechococcus sp. (strain CC9902).